Reading from the N-terminus, the 258-residue chain is uncharacterized protein (258 aa).

This is an uncharacterized protein from Caenorhabditis elegans.